The chain runs to 433 residues: ATP-dependent protease ATPase subunit HslU (433 aa).

Residues Val-18, 60 to 65, Asp-246, Glu-311, and Arg-383 each bind ATP; that span reads GVGKTE.

The protein belongs to the ClpX chaperone family. HslU subfamily. As to quaternary structure, a double ring-shaped homohexamer of HslV is capped on each side by a ring-shaped HslU homohexamer. The assembly of the HslU/HslV complex is dependent on binding of ATP.

It is found in the cytoplasm. ATPase subunit of a proteasome-like degradation complex; this subunit has chaperone activity. The binding of ATP and its subsequent hydrolysis by HslU are essential for unfolding of protein substrates subsequently hydrolyzed by HslV. HslU recognizes the N-terminal part of its protein substrates and unfolds these before they are guided to HslV for hydrolysis. This Nitrobacter hamburgensis (strain DSM 10229 / NCIMB 13809 / X14) protein is ATP-dependent protease ATPase subunit HslU.